Consider the following 272-residue polypeptide: Glutamate 5-kinase (272 aa).

Position 14 (Lys-14) interacts with ATP. 3 residues coordinate substrate: Ser-54, Asp-141, and Asn-157. Residues 177 to 178 and 219 to 225 contribute to the ATP site; these read SD and TGGMLSK.

The protein belongs to the glutamate 5-kinase family.

The protein localises to the cytoplasm. It carries out the reaction L-glutamate + ATP = L-glutamyl 5-phosphate + ADP. Its pathway is amino-acid biosynthesis; L-proline biosynthesis; L-glutamate 5-semialdehyde from L-glutamate: step 1/2. Functionally, catalyzes the transfer of a phosphate group to glutamate to form L-glutamate 5-phosphate. In Streptococcus pyogenes serotype M28 (strain MGAS6180), this protein is Glutamate 5-kinase.